Consider the following 257-residue polypeptide: Diphthine synthase (257 aa).

S-adenosyl-L-methionine-binding positions include isoleucine 11, aspartate 89, isoleucine 92, 117–118 (SV), leucine 169, leucine 210, and histidine 235.

It belongs to the diphthine synthase family. Homodimer.

The catalysed reaction is 2-[(3S)-amino-3-carboxypropyl]-L-histidyl-[translation elongation factor 2] + 3 S-adenosyl-L-methionine = diphthine-[translation elongation factor 2] + 3 S-adenosyl-L-homocysteine + 3 H(+). It participates in protein modification; peptidyl-diphthamide biosynthesis. S-adenosyl-L-methionine-dependent methyltransferase that catalyzes the trimethylation of the amino group of the modified target histidine residue in translation elongation factor 2 (EF-2), to form an intermediate called diphthine. The three successive methylation reactions represent the second step of diphthamide biosynthesis. This is Diphthine synthase from Saccharolobus solfataricus (strain ATCC 35092 / DSM 1617 / JCM 11322 / P2) (Sulfolobus solfataricus).